A 204-amino-acid chain; its full sequence is MTDETAKNGPDAAADAQIEPQVQEETNSTAEDAGQDNNPTAALQAENAELRDRFLRLAAEMDNLRRRTERDVKDAKSYAVTAFARDMLAVSDNLRRAIDAVPAEAKEEAQAGLTALIEGVEMTERAMLSTLERHGVRKIEPEGQKFDPNFHQAMFEIPNPQVPNNTVVQVVQPGYTIGDRVLRPAMVGVAKGGPKAETAQAADA.

The segment at 1–42 is disordered; sequence MTDETAKNGPDAAADAQIEPQVQEETNSTAEDAGQDNNPTAA. Positions 23–41 are enriched in polar residues; that stretch reads QEETNSTAEDAGQDNNPTA.

Belongs to the GrpE family. Homodimer.

The protein resides in the cytoplasm. Participates actively in the response to hyperosmotic and heat shock by preventing the aggregation of stress-denatured proteins, in association with DnaK and GrpE. It is the nucleotide exchange factor for DnaK and may function as a thermosensor. Unfolded proteins bind initially to DnaJ; upon interaction with the DnaJ-bound protein, DnaK hydrolyzes its bound ATP, resulting in the formation of a stable complex. GrpE releases ADP from DnaK; ATP binding to DnaK triggers the release of the substrate protein, thus completing the reaction cycle. Several rounds of ATP-dependent interactions between DnaJ, DnaK and GrpE are required for fully efficient folding. The sequence is that of Protein GrpE from Allorhizobium ampelinum (strain ATCC BAA-846 / DSM 112012 / S4) (Agrobacterium vitis (strain S4)).